Consider the following 831-residue polypeptide: Periplasmic nitrate reductase (831 aa).

Residues 1 to 35 (MTISDSRRTFLKASAAAATASAAGIPLANGTAAEA) constitute a signal peptide (tat-type signal). Positions 42 to 98 (IRWDKAACRFCGTGCSVLVGTKEGRVVATQGDPDAPVNRGLNCIKGYFLSKIMYGED) constitute a 4Fe-4S Mo/W bis-MGD-type domain. Residues cysteine 49, cysteine 52, cysteine 56, and cysteine 84 each contribute to the [4Fe-4S] cluster site. Mo-bis(molybdopterin guanine dinucleotide) is bound by residues lysine 86, glutamine 153, asparagine 178, cysteine 182, 215 to 222 (WGSNMAEM), 246 to 250 (STYEH), 265 to 267 (QTD), methionine 375, glutamine 379, asparagine 485, 511 to 512 (SD), lysine 534, aspartate 561, and 721 to 730 (TGRVLEHWHS). Substrate is bound at residue tryptophan 797. Residues asparagine 805 and lysine 822 each coordinate Mo-bis(molybdopterin guanine dinucleotide).

This sequence belongs to the prokaryotic molybdopterin-containing oxidoreductase family. NasA/NapA/NarB subfamily. Component of the periplasmic nitrate reductase NapAB complex composed of NapA and NapB. Requires [4Fe-4S] cluster as cofactor. It depends on Mo-bis(molybdopterin guanine dinucleotide) as a cofactor. Predicted to be exported by the Tat system. The position of the signal peptide cleavage has not been experimentally proven.

Its subcellular location is the periplasm. It catalyses the reaction 2 Fe(II)-[cytochrome] + nitrate + 2 H(+) = 2 Fe(III)-[cytochrome] + nitrite + H2O. In terms of biological role, catalytic subunit of the periplasmic nitrate reductase complex NapAB. Receives electrons from NapB and catalyzes the reduction of nitrate to nitrite. This chain is Periplasmic nitrate reductase, found in Dinoroseobacter shibae (strain DSM 16493 / NCIMB 14021 / DFL 12).